The following is an 88-amino-acid chain: Small ribosomal subunit protein bS18 (88 aa).

The tract at residues M1 to V22 is disordered.

This sequence belongs to the bacterial ribosomal protein bS18 family. Part of the 30S ribosomal subunit. Forms a tight heterodimer with protein bS6.

In terms of biological role, binds as a heterodimer with protein bS6 to the central domain of the 16S rRNA, where it helps stabilize the platform of the 30S subunit. This chain is Small ribosomal subunit protein bS18 (rpsR), found in Thermus thermophilus.